The following is a 305-amino-acid chain: MELIFLGTSAGVPTRTRNVTAILLNLQHPTQSGLWLFDCGEGTQHQLLHTAFNPGKLDKIFISHLHGDHLFGLPGLLCSRSMSGIIQPLTIYGPQGIREFVETALRISGSWTDYPLEIVEIGAGEILDDGLRKVTAYPLEHPLECYGYRIEEHDKPGALNAQALKAAGVPPGPLFQELKAGKTITLEDGRQINGADYLAAPVPGKALAIFGDTGPCDAALDLAKGVDVMVHEATLDITMEAKANSRGHSSTRQAATLAREAGVGKLIITHVSSRYDDKGCQHLLRECRSIFPATELANDFTVFNV.

Residues histidine 64, histidine 66, aspartate 68, histidine 69, histidine 141, aspartate 212, and histidine 270 each coordinate Zn(2+). Aspartate 68 serves as the catalytic Proton acceptor.

Belongs to the RNase Z family. RNase BN subfamily. Homodimer. The cofactor is Zn(2+).

Its function is as follows. Zinc phosphodiesterase, which has both exoribonuclease and endoribonuclease activities. The polypeptide is Ribonuclease BN (Shigella flexneri).